We begin with the raw amino-acid sequence, 1132 residues long: MSHAPRYAELRCKSCFSFLEGASHPEELVGRAAELGLSGLALADVNGLYGIVRAHAEAKRQGLPLIVGAELVVAGLAPGRPARLVLLAQDREGYAGLCRLVTRAHCGEGWTGAPPRRERDAVAVPFEAVAAGARGLFALYPGADGDAVARLKDAFGRRAALAVARHRVAGEEARVLAARSAGRRLGVPVAVTNDVHTHARARQVLQDVLTCVRHGTTVDRAGRRLFPNAERTLKGPEELARLWSDFPEGLAAAADIADQCRFRMEEIRGEHPLPPVVVERGGLAGGVEVATSSPAQAARDGARSTTPSLRLRASLPAEPPAAPAPEAPAAAAAPGLAASAASVAADTGADRDGALAGMALLRELVREGARWRYGGEPPEDVARQLARELDLVESLGYASYFLTVWDVVRFARSRGILCQGRGSAANSAVCYVLGITSIDPVRMGLLFERFISAERGEPPDIDVDFEHERREEVLQYVYQRYGRDRAGMVCEVITYRGKSALRDVGKALGLSLGQVDRLAKLVGSYEDLGQVGPELLAQAGLDAADSERVRMTLALARELQGFPRHLSIHVGGFVITRRPLCETVPIEPAAMPGRTIVQWDKDDLAELDLLKVDLLGLGMLTALSRALALLARHRPAPASPTPVPHPDALATIPAEDPEVYEMLGRADSIGVFQVESRAQMSLAPRLRPRNFYDLVISVAIIRPGPIQGGMIHPYLRRRDGKEQVRYPYAPLEPVLARTLGVPLFQEQAMRLAVIAAGFTPGEADELRRVMTHRRSHEKLAAMKARLVAGMAERGISGADAEEIFKQLLGFAGYGFPESHAASFALLVYASAWLKRYHPAAFACALLNSQPMGFYAPHTLVEDAKRHGVEVRGVDVGCSGWESSLEGAAPGRPAAPGEAAVLRVGLHAIRGLPRAVGEAILEARAAGPFGSVAELVRRARLSRAWLVRLAEAGALGTLAPDRRGAVWRSLAVEADGGDLFAGLAPPEPEAALPEASAADEVSADFTTTGLSVRGHPMALVRPGLGGDRIRTARELGRLPDRAPVEVAGLVIVRQRPETARGIVFVSLEDETGIANLVVMPDVYERFRPVVRGAPFLLARGRVERSGKVVNVRVDSVAPLALAPSMDARARDFH.

The protein belongs to the DNA polymerase type-C family. DnaE2 subfamily.

It localises to the cytoplasm. It carries out the reaction DNA(n) + a 2'-deoxyribonucleoside 5'-triphosphate = DNA(n+1) + diphosphate. DNA polymerase involved in damage-induced mutagenesis and translesion synthesis (TLS). It is not the major replicative DNA polymerase. The chain is Error-prone DNA polymerase from Anaeromyxobacter dehalogenans (strain 2CP-C).